Consider the following 375-residue polypeptide: CLIP domain-containing serine protease B14 (375 aa).

An N-terminal signal peptide occupies residues 1-24 (MYSRRYVACGLLCLLVIAIDQGHG). Residues 29 to 83 (PCTTPNGTAGRCVRVRECGYVLDLLRKDLFAHSDTVHLEGLQCGTRPDGGALVCC) enclose the Clip domain. 3 disulfide bridges follow: Cys30/Cys82, Cys40/Cys71, and Cys46/Cys83. A glycan (N-linked (GlcNAc...) asparagine) is linked at Asn34. The Peptidase S1 domain occupies 101–370 (IIGGNDTELG…YMGWLEREMF (270 aa)). An N-linked (GlcNAc...) asparagine glycan is attached at Asn105. An intrachain disulfide couples Cys131 to Cys147. Catalysis depends on charge relay system residues His146 and Asp213. N-linked (GlcNAc...) asparagine glycosylation is present at Asn238. Intrachain disulfides connect Cys289–Cys307 and Cys317–Cys346. Residue Ser321 is the Charge relay system of the active site. Residue Asn357 is glycosylated (N-linked (GlcNAc...) asparagine).

The protein belongs to the peptidase S1 family. CLIP subfamily. In terms of processing, N-glycosylated. Post-translationally, proteolytically cleaved. In terms of tissue distribution, expressed by a subpopulation of hemocytes.

It localises to the secreted. Functionally, serine protease. Plays a role in innate immunity against infections by parasite P.berghei and by Gram-negative bacteria such as E.coli. In response to P.berghei infection, contributes to the clearing of parasite ookinetes independent of melanization, an innate immune response which consists in the deposition of melanin pigments on invading pathogens and parasites. May play a role in non-septic wound healing. This is CLIP domain-containing serine protease B14 from Anopheles gambiae (African malaria mosquito).